Consider the following 495-residue polypeptide: Glycerol kinase (495 aa).

Thr-14 contacts ADP. Thr-14, Thr-15, and Ser-16 together coordinate ATP. Thr-14 is a sn-glycerol 3-phosphate binding site. Arg-18 serves as a coordination point for ADP. Residues Arg-84, Glu-85, Tyr-136, and Asp-246 each coordinate sn-glycerol 3-phosphate. Glycerol-binding residues include Arg-84, Glu-85, Tyr-136, Asp-246, and Gln-247. The ADP site is built by Thr-268 and Gly-312. ATP contacts are provided by Thr-268, Gly-312, Gln-316, and Gly-413. 2 residues coordinate ADP: Gly-413 and Asn-417.

This sequence belongs to the FGGY kinase family.

It carries out the reaction glycerol + ATP = sn-glycerol 3-phosphate + ADP + H(+). It participates in polyol metabolism; glycerol degradation via glycerol kinase pathway; sn-glycerol 3-phosphate from glycerol: step 1/1. Inhibited by fructose 1,6-bisphosphate (FBP). In terms of biological role, key enzyme in the regulation of glycerol uptake and metabolism. Catalyzes the phosphorylation of glycerol to yield sn-glycerol 3-phosphate. The sequence is that of Glycerol kinase from Bdellovibrio bacteriovorus (strain ATCC 15356 / DSM 50701 / NCIMB 9529 / HD100).